Consider the following 65-residue polypeptide: Large ribosomal subunit protein bL35 (65 aa).

The protein belongs to the bacterial ribosomal protein bL35 family.

In Pectobacterium atrosepticum (strain SCRI 1043 / ATCC BAA-672) (Erwinia carotovora subsp. atroseptica), this protein is Large ribosomal subunit protein bL35.